We begin with the raw amino-acid sequence, 632 residues long: Polygalacturonase non-catalytic subunit AroGP3 (632 aa).

An N-terminal signal peptide occupies residues 1–27 (MHTKILLPSCILLLLLFTLSSLDVVVA). Residues 28-109 (KDGDESGNPF…MCALDLLPSL (82 aa)) constitute a propeptide that is removed on maturation. N-linked (GlcNAc...) asparagine glycans are attached at residues N125, N143, N258, N280, N336, N371, and N389. A BURP domain is found at 417–631 (FFREKMLKSG…FENDMTWATA (215 aa)).

In terms of assembly, interacts with polygalacturonase to form heterodimers.

The protein resides in the secreted. It is found in the extracellular space. It localises to the apoplast. The protein localises to the cell wall. In terms of biological role, non-catalytic subunit of polygalacturonase. This is Polygalacturonase non-catalytic subunit AroGP3 (GP3) from Solanum lycopersicum (Tomato).